We begin with the raw amino-acid sequence, 259 residues long: Transmembrane protein 81 (259 aa).

The signal sequence occupies residues 1–18; the sequence is MALSTLWLVLMLWTSLFS. Topologically, residues 19–221 are extracellular; that stretch reads DSQCSTLSQA…KVYSSSTIRN (203 aa). The Ig-like domain occupies 97 to 172; that stretch reads GRRLVLDCLE…VLDTGKRRVK (76 aa). A disulfide bridge connects residues C104 and C161. Residues 222–242 traverse the membrane as a helical segment; sequence IVIISVPLSFAIAVVIFIFLF. The Cytoplasmic segment spans residues 243 to 259; that stretch reads CYSRRARRAAHLCQDNI.

Forms a complex with izumo1 and spaca6 on spermatocyte cell membrane. The complex binds to oocyte protein bncr. In terms of tissue distribution, expressed in sperm.

It localises to the cell membrane. In terms of biological role, essential fertilization factor required for male fertility. Part of a conserved trimeric sperm complex with the essential fertilization factors IZUMO1 and SPACA6 which bridges sperm and oocyte membranes during fertilization by binding to IZUMO1R/JUNO on the oocyte. The polypeptide is Transmembrane protein 81 (Danio rerio (Zebrafish)).